Reading from the N-terminus, the 201-residue chain is Proteasome subunit beta 1 (201 aa).

A propeptide spans 1 to 10 (MNGSPSAMKG) (removed in mature form; by autocatalysis). The active-site Nucleophile is T11.

Belongs to the peptidase T1B family. In terms of assembly, the 20S proteasome core is composed of 14 alpha and 14 beta subunits that assemble into four stacked heptameric rings, resulting in a barrel-shaped structure. The two inner rings, each composed of seven catalytic beta subunits, are sandwiched by two outer rings, each composed of seven alpha subunits. The catalytic chamber with the active sites is on the inside of the barrel. Has a gated structure, the ends of the cylinder being occluded by the N-termini of the alpha-subunits. Is capped at one or both ends by the proteasome regulatory ATPase, PAN.

Its subcellular location is the cytoplasm. The catalysed reaction is Cleavage of peptide bonds with very broad specificity.. The formation of the proteasomal ATPase PAN-20S proteasome complex, via the docking of the C-termini of PAN into the intersubunit pockets in the alpha-rings, triggers opening of the gate for substrate entry. Interconversion between the open-gate and close-gate conformations leads to a dynamic regulation of the 20S proteasome proteolysis activity. Functionally, component of the proteasome core, a large protease complex with broad specificity involved in protein degradation. This is Proteasome subunit beta 1 from Thermococcus gammatolerans (strain DSM 15229 / JCM 11827 / EJ3).